Reading from the N-terminus, the 180-residue chain is Transcription factor HES-7.1-A (180 aa).

One can recognise a bHLH domain in the interval 13–70 (HRKLLKPLVEKRRRERINNSLEKLRIFLFQTLKSEKLKNPKVEKAEILECTVQFLQSR). Positions 84-116 (YQSGFQHCLETTLHFMNSKPDMNGVTKELLSHQ) constitute an Orange domain. Positions 176 to 179 (WRPW) match the WRPW motif motif.

As to quaternary structure, transcription repression requires formation of a complex with a corepressor protein of the Groucho/TLE family. As to expression, expressed in the presumptive midbrain-hindbrain boundary (MHB) as early as the early gastrula stage (stage 10.5). Expression in the MHB continues through to tailbud stage. Also transiently expressed in the eye anlage at late neurula stage.

The protein localises to the nucleus. Functionally, transcriptional repressor. Represses transcription from both N box- and E box-containing promoters. Demarcates the prospective midbrain-hindbrain boundary (MHB) region in the neuroectoderm in early gastrulae embryos by repressing transcription of a number of target genes. The chain is Transcription factor HES-7.1-A (hes7.1-a) from Xenopus laevis (African clawed frog).